The following is a 335-amino-acid chain: MNYKYLILSLFLIVGVFFAGCTQQMNADEIAKKMQEKYEAMKSMEADVLITTNIMGQTETMQYKYAFEKPNKFYMENDDVLIVCDGKTYYMYDKKKNQYTKMEIKGELNNMFNPDYGKFIKSMLEKFNVSYLGEKTYDGRKCYVLELISKENPEEKMKMYVDEEYWQPLKIEMDGVTIEYKNVKFNVDVPDDRFKFVPPEGAKLMSSGAMTTSKNIDEVQKDVSFKILVPKYTAGLELQNAMATKQNANNEESETVILTYGENGELAIIESKDNKPLTIPENGSNLITLKNGVKALISDSGDVKMLMFEYNGIKVIIAGKLDKNELIKIANSMIE.

This is an uncharacterized protein from Methanocaldococcus jannaschii (strain ATCC 43067 / DSM 2661 / JAL-1 / JCM 10045 / NBRC 100440) (Methanococcus jannaschii).